The following is a 707-amino-acid chain: Elongation factor G (707 aa).

Positions 8–297 constitute a tr-type G domain; sequence ERVRNIGIAA…AVLDYLPSPL (290 aa). GTP-binding positions include 17–24, 96–100, and 150–153; these read AHIDAGKT, DTPGH, and NKMD.

This sequence belongs to the TRAFAC class translation factor GTPase superfamily. Classic translation factor GTPase family. EF-G/EF-2 subfamily.

Its subcellular location is the cytoplasm. Functionally, catalyzes the GTP-dependent ribosomal translocation step during translation elongation. During this step, the ribosome changes from the pre-translocational (PRE) to the post-translocational (POST) state as the newly formed A-site-bound peptidyl-tRNA and P-site-bound deacylated tRNA move to the P and E sites, respectively. Catalyzes the coordinated movement of the two tRNA molecules, the mRNA and conformational changes in the ribosome. This chain is Elongation factor G, found in Gloeobacter violaceus (strain ATCC 29082 / PCC 7421).